The primary structure comprises 746 residues: NAD(P)H-quinone oxidoreductase subunit 5, chloroplastic (746 aa).

The next 16 membrane-spanning stretches (helical) occupy residues 9–29, 40–60, 88–108, 125–145, 147–167, 185–205, 225–245, 258–278, 283–303, 327–347, 354–374, 396–416, 425–445, 554–574, 610–630, and 726–746; these read YIIL…LLFV, WAFV…NLAI, LIDP…IMVL, FAYM…SNLI, IHIF…FWFT, GDFG…SLEF, FAIL…AQFP, TPIS…FLVA, LFIV…ITLL, LGYI…FHLI, ALLF…VGYS, TTFL…CFWS, WLYS…TAFY, LFPL…GIPF, IFSV…YGSV, and YLFL…YFDF.

Belongs to the complex I subunit 5 family. As to quaternary structure, NDH is composed of at least 16 different subunits, 5 of which are encoded in the nucleus.

The protein resides in the plastid. The protein localises to the chloroplast thylakoid membrane. It catalyses the reaction a plastoquinone + NADH + (n+1) H(+)(in) = a plastoquinol + NAD(+) + n H(+)(out). The enzyme catalyses a plastoquinone + NADPH + (n+1) H(+)(in) = a plastoquinol + NADP(+) + n H(+)(out). NDH shuttles electrons from NAD(P)H:plastoquinone, via FMN and iron-sulfur (Fe-S) centers, to quinones in the photosynthetic chain and possibly in a chloroplast respiratory chain. The immediate electron acceptor for the enzyme in this species is believed to be plastoquinone. Couples the redox reaction to proton translocation, and thus conserves the redox energy in a proton gradient. The chain is NAD(P)H-quinone oxidoreductase subunit 5, chloroplastic (ndhF) from Dioscorea elephantipes (Elephant's foot yam).